The following is a 158-amino-acid chain: NADH-quinone oxidoreductase subunit B (158 aa).

[4Fe-4S] cluster-binding residues include Cys-37, Cys-38, Cys-102, and Cys-132.

It belongs to the complex I 20 kDa subunit family. In terms of assembly, NDH-1 is composed of 14 different subunits. Subunits NuoB, C, D, E, F, and G constitute the peripheral sector of the complex. [4Fe-4S] cluster serves as cofactor.

It localises to the cell inner membrane. The catalysed reaction is a quinone + NADH + 5 H(+)(in) = a quinol + NAD(+) + 4 H(+)(out). Its function is as follows. NDH-1 shuttles electrons from NADH, via FMN and iron-sulfur (Fe-S) centers, to quinones in the respiratory chain. Couples the redox reaction to proton translocation (for every two electrons transferred, four hydrogen ions are translocated across the cytoplasmic membrane), and thus conserves the redox energy in a proton gradient. The chain is NADH-quinone oxidoreductase subunit B from Aromatoleum aromaticum (strain DSM 19018 / LMG 30748 / EbN1) (Azoarcus sp. (strain EbN1)).